The following is a 92-amino-acid chain: MSGNYYYPLDLSWSTEEISSVLHFLNKVELAYEKKVDAKQLLDSYKTYKTIVKSKAQEKQIDRDFQKVSGYSTYQVVKKAKAIEKGFFSLGN.

The protein belongs to the UPF0223 family.

The sequence is that of UPF0223 protein SPy_1248/M5005_Spy0958 from Streptococcus pyogenes serotype M1.